The sequence spans 241 residues: Large ribosomal subunit protein uL3 (241 aa).

2 disordered regions span residues 140–168 and 216–241; these read SHRS…HMGD and APKP…EEGA. At Gln-151 the chain carries N5-methylglutamine.

The protein belongs to the universal ribosomal protein uL3 family. Part of the 50S ribosomal subunit. Forms a cluster with proteins L14 and L19. Post-translationally, methylated by PrmB.

One of the primary rRNA binding proteins, it binds directly near the 3'-end of the 23S rRNA, where it nucleates assembly of the 50S subunit. This is Large ribosomal subunit protein uL3 from Xanthobacter autotrophicus (strain ATCC BAA-1158 / Py2).